The primary structure comprises 326 residues: Glyoxylate/hydroxypyruvate reductase B (326 aa).

Catalysis depends on residues Arg237 and Glu266. His285 serves as the catalytic Proton donor.

It belongs to the D-isomer specific 2-hydroxyacid dehydrogenase family. GhrB subfamily. In terms of assembly, homodimer.

Its subcellular location is the cytoplasm. It catalyses the reaction glycolate + NADP(+) = glyoxylate + NADPH + H(+). It carries out the reaction (R)-glycerate + NAD(+) = 3-hydroxypyruvate + NADH + H(+). The enzyme catalyses (R)-glycerate + NADP(+) = 3-hydroxypyruvate + NADPH + H(+). Functionally, catalyzes the NADPH-dependent reduction of glyoxylate and hydroxypyruvate into glycolate and glycerate, respectively. In Yersinia pseudotuberculosis serotype O:1b (strain IP 31758), this protein is Glyoxylate/hydroxypyruvate reductase B.